The primary structure comprises 241 residues: Phosphoribosylaminoimidazole-succinocarboxamide synthase (241 aa).

This sequence belongs to the SAICAR synthetase family.

It catalyses the reaction 5-amino-1-(5-phospho-D-ribosyl)imidazole-4-carboxylate + L-aspartate + ATP = (2S)-2-[5-amino-1-(5-phospho-beta-D-ribosyl)imidazole-4-carboxamido]succinate + ADP + phosphate + 2 H(+). It participates in purine metabolism; IMP biosynthesis via de novo pathway; 5-amino-1-(5-phospho-D-ribosyl)imidazole-4-carboxamide from 5-amino-1-(5-phospho-D-ribosyl)imidazole-4-carboxylate: step 1/2. In Methanoculleus marisnigri (strain ATCC 35101 / DSM 1498 / JR1), this protein is Phosphoribosylaminoimidazole-succinocarboxamide synthase.